Here is a 399-residue protein sequence, read N- to C-terminus: Proteasome-activating nucleotidase (399 aa).

The stretch at 19–60 (ITYLKRRIRQLELQVRMLEADKERLERELSRLRSEMSRLRQP) forms a coiled coil. ATP-binding positions include 184 to 189 (GCGKTL) and H323. A docks into pockets in the proteasome alpha-ring to cause gate opening region spans residues 397-399 (IYG).

Belongs to the AAA ATPase family. In terms of assembly, homohexamer. The hexameric complex has a two-ring architecture resembling a top hat that caps the 20S proteasome core at one or both ends. Upon ATP-binding, the C-terminus of PAN interacts with the alpha-rings of the proteasome core by binding to the intersubunit pockets.

It localises to the cytoplasm. Functionally, ATPase which is responsible for recognizing, binding, unfolding and translocation of substrate proteins into the archaeal 20S proteasome core particle. Is essential for opening the gate of the 20S proteasome via an interaction with its C-terminus, thereby allowing substrate entry and access to the site of proteolysis. Thus, the C-termini of the proteasomal ATPase function like a 'key in a lock' to induce gate opening and therefore regulate proteolysis. Unfolding activity requires energy from ATP hydrolysis, whereas ATP binding alone promotes ATPase-20S proteasome association which triggers gate opening, and supports translocation of unfolded substrates. This is Proteasome-activating nucleotidase from Pyrococcus horikoshii (strain ATCC 700860 / DSM 12428 / JCM 9974 / NBRC 100139 / OT-3).